A 239-amino-acid polypeptide reads, in one-letter code: Proteasome activator complex subunit 2 (239 aa).

Alanine 2 bears the N-acetylalanine mark. Serine 10 is modified (phosphoserine).

Belongs to the PA28 family. As to quaternary structure, heterodimer of PSME1 and PSME2, which forms a hexameric ring.

Functionally, implicated in immunoproteasome assembly and required for efficient antigen processing. The PA28 activator complex enhances the generation of class I binding peptides by altering the cleavage pattern of the proteasome. In Homo sapiens (Human), this protein is Proteasome activator complex subunit 2 (PSME2).